A 320-amino-acid chain; its full sequence is Cytochrome f (320 aa).

The signal sequence occupies residues 1–32 (MKTKKSYDKVTRWVTPPILMLIIIHIITGACS). Heme is bound by residues tyrosine 36, cysteine 56, cysteine 59, and histidine 60. Residues 286–306 (IQGLLGFLASVVLAQIFLVLK) traverse the membrane as a helical segment.

The protein belongs to the cytochrome f family. In terms of assembly, the 4 large subunits of the cytochrome b6-f complex are cytochrome b6, subunit IV (17 kDa polypeptide, petD), cytochrome f and the Rieske protein, while the 4 small subunits are PetG, PetL, PetM and PetN. The complex functions as a dimer. It depends on heme as a cofactor.

The protein resides in the plastid. The protein localises to the chloroplast thylakoid membrane. Component of the cytochrome b6-f complex, which mediates electron transfer between photosystem II (PSII) and photosystem I (PSI), cyclic electron flow around PSI, and state transitions. The polypeptide is Cytochrome f (Gnetum parvifolium (Small-leaved jointfir)).